The primary structure comprises 946 residues: Protein RRC1 (946 aa).

Disordered stretches follow at residues 1–29 (MSSF…KAED) and 41–183 (SFQG…NLYV). Composition is skewed to basic and acidic residues over residues 15–29 (KHRE…KAED), 62–75 (DKPK…KSKD), and 98–147 (KGKE…DRQG). Residues 179–260 (TNLYVGNLSP…YELKIGWGKA (82 aa)) enclose the RRM domain. The stretch at 329 to 372 (VIDTLALYVLDGECAFEQAIMERGRGNPLFKFMFELGSKEHTYY) is one SURP motif repeat. Residues 437 to 582 (LTDPQRDEFE…GLRSTFLRSG (146 aa)) form the CID domain. The region spanning 631–665 (LMNLPIAELERRCRHNGLSLVGGRVMMVTRLLSLE) is the SAP domain. 2 disordered regions span residues 740 to 797 (ASKW…EQRQ) and 836 to 946 (EVDY…RGTR). Residues 757-767 (SSSSGSDNTGG) are compositionally biased toward polar residues. Basic and acidic residues-rich tracts occupy residues 772-781 (ADGEDLKGND), 854-868 (IIER…QESS), and 886-946 (STRE…RGTR).

Component of the SWAP1-SFPS-RRC1 splicing factor complex which modulates pre-mRNA splicing to promote photomorphogenesis. Interacts with SWAP1 in a light-independent manner. As to expression, expressed in leaves, inflorescence stems, roots, flower buds, open flowers and siliques.

The protein localises to the nucleus speckle. Its function is as follows. As a member of the SWAP1-SFPS-RRC1 splicing factor complex, modulates photomorphogenesis by regulating the gene expression and pre-messenger RNA (mRNA) alternative splicing of a large number of genes, including those involved in plant responses to light signaling. SR-like splicing factor required for phytochrome B (phyB) signal transduction and involved in phyB-dependent alternative splicing. In Arabidopsis thaliana (Mouse-ear cress), this protein is Protein RRC1.